Here is a 527-residue protein sequence, read N- to C-terminus: Type-2 serine--tRNA ligase (527 aa).

Ala317 is an L-serine binding site. Cys319 contacts Zn(2+). Arg349 is a binding site for L-serine. ATP contacts are provided by residues 349-351 and 360-361; these read RWE and RV. An L-serine-binding site is contributed by 366 to 368; the sequence is RIE. Zn(2+)-binding residues include Glu368 and Cys478. Arg485 is a binding site for ATP.

Belongs to the class-II aminoacyl-tRNA synthetase family. Type-2 seryl-tRNA synthetase subfamily. Homodimer. The cofactor is Zn(2+).

Its subcellular location is the cytoplasm. The catalysed reaction is tRNA(Ser) + L-serine + ATP = L-seryl-tRNA(Ser) + AMP + diphosphate + H(+). It carries out the reaction tRNA(Sec) + L-serine + ATP = L-seryl-tRNA(Sec) + AMP + diphosphate + H(+). The protein operates within aminoacyl-tRNA biosynthesis; selenocysteinyl-tRNA(Sec) biosynthesis; L-seryl-tRNA(Sec) from L-serine and tRNA(Sec): step 1/1. Catalyzes the attachment of serine to tRNA(Ser). Is also able to aminoacylate tRNA(Sec) with serine, to form the misacylated tRNA L-seryl-tRNA(Sec), which will be further converted into selenocysteinyl-tRNA(Sec). The protein is Type-2 serine--tRNA ligase of Methanopyrus kandleri (strain AV19 / DSM 6324 / JCM 9639 / NBRC 100938).